The chain runs to 90 residues: Small ribosomal subunit protein uS17 (90 aa).

The protein belongs to the universal ribosomal protein uS17 family. Part of the 30S ribosomal subunit.

In terms of biological role, one of the primary rRNA binding proteins, it binds specifically to the 5'-end of 16S ribosomal RNA. In Burkholderia cenocepacia (strain ATCC BAA-245 / DSM 16553 / LMG 16656 / NCTC 13227 / J2315 / CF5610) (Burkholderia cepacia (strain J2315)), this protein is Small ribosomal subunit protein uS17.